We begin with the raw amino-acid sequence, 398 residues long: Phosphoglycerate kinase (398 aa).

Substrate-binding positions include 22–24 (DFN), R38, 61–64 (HLGR), R120, and R153. ATP is bound by residues K204, E326, and 352-355 (GGDT).

This sequence belongs to the phosphoglycerate kinase family. In terms of assembly, monomer.

Its subcellular location is the cytoplasm. It catalyses the reaction (2R)-3-phosphoglycerate + ATP = (2R)-3-phospho-glyceroyl phosphate + ADP. It participates in carbohydrate degradation; glycolysis; pyruvate from D-glyceraldehyde 3-phosphate: step 2/5. The protein is Phosphoglycerate kinase of Geobacter metallireducens (strain ATCC 53774 / DSM 7210 / GS-15).